Consider the following 101-residue polypeptide: uncharacterized protein (101 aa).

Residues 1–23 (MERRTGVVLIIFVTFCEAMMARA) form the signal peptide. Residues 38 to 58 (FLLFIIHTSCTMVAFIIGNLA) form a helical membrane-spanning segment.

The protein localises to the host membrane. This is an uncharacterized protein from Cryphonectria parasitica (Chestnut blight fungus).